A 442-amino-acid polypeptide reads, in one-letter code: Tol-Pal system protein TolB (442 aa).

Positions 1–26 are cleaved as a signal peptide; that stretch reads MRHRSCFSLFAGLALVFCLAVGTAAA.

Belongs to the TolB family. As to quaternary structure, the Tol-Pal system is composed of five core proteins: the inner membrane proteins TolA, TolQ and TolR, the periplasmic protein TolB and the outer membrane protein Pal. They form a network linking the inner and outer membranes and the peptidoglycan layer.

Its subcellular location is the periplasm. Its function is as follows. Part of the Tol-Pal system, which plays a role in outer membrane invagination during cell division and is important for maintaining outer membrane integrity. The sequence is that of Tol-Pal system protein TolB from Nitratidesulfovibrio vulgaris (strain ATCC 29579 / DSM 644 / CCUG 34227 / NCIMB 8303 / VKM B-1760 / Hildenborough) (Desulfovibrio vulgaris).